Consider the following 247-residue polypeptide: VQ motif-containing protein 4 (247 aa).

Residues Met-1–Leu-128 are disordered. The residue at position 16 (Ser-16) is a Phosphoserine. Residues Asn-21–Pro-37 are compositionally biased toward low complexity. 2 stretches are compositionally biased toward polar residues: residues Arg-48–Thr-75 and Leu-87–Ser-106. Positions Phe-67 to Gly-76 match the VQ motif. Phosphoserine occurs at positions 106, 155, 163, 165, and 175. A Phosphothreonine modification is found at Thr-178. Residues Pro-184–Ser-247 form a disordered region. Position 194 is a phosphoserine (Ser-194). The span at Ala-200–Phe-210 shows a compositional bias: basic and acidic residues. Position 215 is a phosphoserine (Ser-215). A phosphothreonine mark is found at Thr-219 and Thr-234. Residues Ser-235, Ser-239, and Ser-243 each carry the phosphoserine modification. Residues Pro-236 to Ser-247 show a composition bias toward polar residues.

In terms of assembly, interacts with MPK3 and MPK6. Phosphorylated on serine and threonine residues by MPK6 following treatment with the pathogen-associated molecular pattern (PAMP) flg22. MAP kinase-mediated phosphorylation after PAMP elicitation causes degradation of VQ4, allowing WRKY33 to promote transcription from defense genes.

It localises to the nucleus. In terms of biological role, acts as a negative regulator of WRKY33 transcription factor activity in the promotion of defense gene expression. Acts as a negative regulator of pathogen-associated molecular pattern (PAMP)-induced responses to modulate resistance to pathogens. The polypeptide is VQ motif-containing protein 4 (Arabidopsis thaliana (Mouse-ear cress)).